The chain runs to 330 residues: mRNA-capping enzyme (330 aa).

The active-site N6-GMP-lysine intermediate is the lysine 82.

Belongs to the eukaryotic GTase family. As to quaternary structure, monomer. Mg(2+) serves as cofactor. Mn(2+) is required as a cofactor.

The catalysed reaction is a 5'-end diphospho-ribonucleoside in mRNA + GTP + H(+) = a 5'-end (5'-triphosphoguanosine)-ribonucleoside in mRNA + diphosphate. Its function is as follows. mRNA capping. Transfers a GMP cap onto the end of mRNA that terminates with a 5'-diphosphate tail. This Chlorella (PBCV-1) protein is mRNA-capping enzyme.